The following is a 481-amino-acid chain: Tryptophan 5-hydroxylase (481 aa).

The ACT domain maps to 56–131; the sequence is SVIFSLKNEI…NVISMSPPEN (76 aa). Residues Tyr-272, Arg-294, and Thr-302 each coordinate L-tryptophan. Positions 309, 314, and 354 each coordinate Fe cation. Residues Ser-373 and Ile-403 each coordinate L-tryptophan.

The protein belongs to the biopterin-dependent aromatic amino acid hydroxylase family. In terms of assembly, homotetramer. It depends on Fe(2+) as a cofactor.

The catalysed reaction is (6R)-L-erythro-5,6,7,8-tetrahydrobiopterin + L-tryptophan + O2 = 5-hydroxy-L-tryptophan + (4aS,6R)-4a-hydroxy-L-erythro-5,6,7,8-tetrahydrobiopterin. Its pathway is aromatic compound metabolism; serotonin biosynthesis; serotonin from L-tryptophan: step 1/2. Functionally, oxidizes L-tryptophan to 5-hydroxy-l-tryptophan in the rate-determining step of serotonin biosynthesis. This is Tryptophan 5-hydroxylase (tph1) from Xenopus laevis (African clawed frog).